Consider the following 317-residue polypeptide: Aspartate carbamoyltransferase catalytic subunit (317 aa).

Residues Arg-65 and Thr-66 each coordinate carbamoyl phosphate. Lys-93 serves as a coordination point for L-aspartate. Carbamoyl phosphate contacts are provided by Arg-115, His-145, and Gln-148. L-aspartate is bound by residues Arg-178 and Arg-233. Residues Gly-274 and Pro-275 each coordinate carbamoyl phosphate.

Belongs to the aspartate/ornithine carbamoyltransferase superfamily. ATCase family. As to quaternary structure, heterododecamer (2C3:3R2) of six catalytic PyrB chains organized as two trimers (C3), and six regulatory PyrI chains organized as three dimers (R2).

The catalysed reaction is carbamoyl phosphate + L-aspartate = N-carbamoyl-L-aspartate + phosphate + H(+). It participates in pyrimidine metabolism; UMP biosynthesis via de novo pathway; (S)-dihydroorotate from bicarbonate: step 2/3. Functionally, catalyzes the condensation of carbamoyl phosphate and aspartate to form carbamoyl aspartate and inorganic phosphate, the committed step in the de novo pyrimidine nucleotide biosynthesis pathway. This Methylobacillus flagellatus (strain ATCC 51484 / DSM 6875 / VKM B-1610 / KT) protein is Aspartate carbamoyltransferase catalytic subunit.